Consider the following 287-residue polypeptide: Diaminopimelate epimerase (287 aa).

Substrate contacts are provided by Asn15 and Asn66. The active-site Proton donor is Cys75. Substrate is bound by residues 76–77 (GN), Asn170, Asn203, and 221–222 (ER). Cys230 acts as the Proton acceptor in catalysis. 231 to 232 (GT) lines the substrate pocket.

This sequence belongs to the diaminopimelate epimerase family. In terms of assembly, homodimer.

Its subcellular location is the cytoplasm. It carries out the reaction (2S,6S)-2,6-diaminopimelate = meso-2,6-diaminopimelate. It functions in the pathway amino-acid biosynthesis; L-lysine biosynthesis via DAP pathway; DL-2,6-diaminopimelate from LL-2,6-diaminopimelate: step 1/1. In terms of biological role, catalyzes the stereoinversion of LL-2,6-diaminopimelate (L,L-DAP) to meso-diaminopimelate (meso-DAP), a precursor of L-lysine and an essential component of the bacterial peptidoglycan. The chain is Diaminopimelate epimerase from Desulfovibrio desulfuricans (strain ATCC 27774 / DSM 6949 / MB).